Reading from the N-terminus, the 347-residue chain is uncharacterized protein (347 aa).

An N-terminal signal peptide occupies residues 1 to 26 (MQGRVAGSCAPLGLLLVCLHLPGLFA). A compositionally biased stretch (polar residues) spans 41–60 (GTNLPQLGQPSSTGPSNSEH). 2 disordered regions span residues 41 to 110 (GTNL…MDSW) and 148 to 189 (SGPL…AGGK). Over residues 148–157 (SGPLPGESSP) the composition is skewed to low complexity.

In terms of assembly, binds to numerous extracellular matrix proteins.

Its subcellular location is the secreted. The protein localises to the extracellular space. The protein resides in the extracellular matrix. This is an uncharacterized protein from Pan troglodytes (Chimpanzee).